The primary structure comprises 239 residues: Small ribosomal subunit protein uS2 (239 aa).

This sequence belongs to the universal ribosomal protein uS2 family.

The sequence is that of Small ribosomal subunit protein uS2 from Prochlorococcus marinus (strain MIT 9303).